Reading from the N-terminus, the 172-residue chain is Small ribosomal subunit protein uS5 (172 aa).

Positions 17-80 (LREKMIAVNR…DEARRKMIKV (64 aa)) constitute an S5 DRBM domain.

Belongs to the universal ribosomal protein uS5 family. As to quaternary structure, part of the 30S ribosomal subunit. Contacts proteins S4 and S8.

Functionally, with S4 and S12 plays an important role in translational accuracy. In terms of biological role, located at the back of the 30S subunit body where it stabilizes the conformation of the head with respect to the body. This Polynucleobacter asymbioticus (strain DSM 18221 / CIP 109841 / QLW-P1DMWA-1) (Polynucleobacter necessarius subsp. asymbioticus) protein is Small ribosomal subunit protein uS5.